The chain runs to 864 residues: Paramyosin (864 aa).

Residues 1-30 are nonhelical region; the sequence is MSSLYRDLDSDVSSTRIVRHSYNVYRGSSP. Positions 31–853 form a coiled coil; it reads SSQNRLESRI…QTVRRSRSMS (823 aa). Residues 854 to 864 form a nonhelical region region; sequence VSREVTRVVRV.

It belongs to the paramyosin family. As to quaternary structure, homodimer. In terms of processing, phosphorylated. In terms of tissue distribution, most abundantly expressed in muscle tissues from byssus retractor and adductor muscles. Low expression in foot, gill, inner mantle and outer mantle.

The protein resides in the cytoplasm. Its subcellular location is the myofibril. Functionally, paramyosin is a major structural component of many thick filaments isolated from invertebrate muscles. This Mytilus galloprovincialis (Mediterranean mussel) protein is Paramyosin.